A 393-amino-acid polypeptide reads, in one-letter code: Upstream-binding factor 1-like protein 1 (393 aa).

2 consecutive DNA-binding regions (HMG box) follow at residues 100–168 (PKRP…ARFR) and 222–288 (QKPP…DLWL). Residues 308–393 (KNMAMTGGPD…SSGEEIEVDV (86 aa)) are disordered. The segment covering 365 to 377 (EENRKKDREKEES) has biased composition (basic and acidic residues).

It is found in the cytoplasm. The protein resides in the nucleus. Essential for proliferation of the inner cell mass and trophectodermal cells in peri-implantation development. The polypeptide is Upstream-binding factor 1-like protein 1 (Homo sapiens (Human)).